Here is an 88-residue protein sequence, read N- to C-terminus: Insulin-related peptide 4 (88 aa).

A signal peptide spans 1 to 19 (MKLTLIILLVVAYSWCSEA). The propeptide occupies 20–45 (QNEARVFCGRVLSERLAALCWGPNSV). R65 bears the Arginine amide mark. Positions 69-88 (GLATECCDKACTVEELLSYC) are excised as a propeptide.

Belongs to the insulin family. As to expression, DAGWWLTRGAARSLGGVR-amide: Expressed in corpora cardiaca (CC), corpora allata (CA), antennal lobe (AL) and gnathal ganglion (GNG) (at protein level). Expression in CC and CA detected in most animals, in AL and GNG in few animals (at protein level).

It is found in the secreted. The sequence is that of Insulin-related peptide 4 from Agrotis ipsilon (Black cutworm moth).